The following is a 176-amino-acid chain: Ribosome rescue factor SmrB (176 aa).

A Smr domain is found at 93 to 168 (LDLHGYRQSE…GDAALLVLID (76 aa)).

Belongs to the SmrB family. Associates with collided ribosomes, but not with correctly translating polysomes.

Its function is as follows. Acts as a ribosome collision sensor. Detects stalled/collided disomes (pairs of ribosomes where the leading ribosome is stalled and a second ribosome has collided with it) and endonucleolytically cleaves mRNA at the 5' boundary of the stalled ribosome. Stalled/collided disomes form a new interface (primarily via the 30S subunits) that binds SmrB. Cleaved mRNA becomes available for tmRNA ligation, leading to ribosomal subunit dissociation and rescue of stalled ribosomes. In Shewanella baltica (strain OS195), this protein is Ribosome rescue factor SmrB.